Reading from the N-terminus, the 275-residue chain is Polyamine aminopropyltransferase (275 aa).

The 234-residue stretch at 2–235 (HLWFTEKQND…AMWSFTIGSK (234 aa)) folds into the PABS domain. Residue glutamine 31 coordinates S-methyl-5'-thioadenosine. The spermidine site is built by histidine 62 and aspartate 86. Residues glutamate 106 and 137–138 (DG) contribute to the S-methyl-5'-thioadenosine site. Catalysis depends on aspartate 155, which acts as the Proton acceptor. 155-158 (DSTD) is a spermidine binding site. Proline 162 provides a ligand contact to S-methyl-5'-thioadenosine.

It belongs to the spermidine/spermine synthase family. As to quaternary structure, homodimer or homotetramer.

It is found in the cytoplasm. It catalyses the reaction S-adenosyl 3-(methylsulfanyl)propylamine + putrescine = S-methyl-5'-thioadenosine + spermidine + H(+). The protein operates within amine and polyamine biosynthesis; spermidine biosynthesis; spermidine from putrescine: step 1/1. Catalyzes the irreversible transfer of a propylamine group from the amino donor S-adenosylmethioninamine (decarboxy-AdoMet) to putrescine (1,4-diaminobutane) to yield spermidine. The protein is Polyamine aminopropyltransferase of Desulforudis audaxviator (strain MP104C).